Consider the following 460-residue polypeptide: Argininosuccinate lyase (460 aa).

The protein belongs to the lyase 1 family. Argininosuccinate lyase subfamily.

It localises to the cytoplasm. The catalysed reaction is 2-(N(omega)-L-arginino)succinate = fumarate + L-arginine. Its pathway is amino-acid biosynthesis; L-arginine biosynthesis; L-arginine from L-ornithine and carbamoyl phosphate: step 3/3. This Campylobacter hominis (strain ATCC BAA-381 / DSM 21671 / CCUG 45161 / LMG 19568 / NCTC 13146 / CH001A) protein is Argininosuccinate lyase.